A 109-amino-acid polypeptide reads, in one-letter code: Nucleoid-associated protein ECA1177 (109 aa).

The protein belongs to the YbaB/EbfC family. As to quaternary structure, homodimer.

It localises to the cytoplasm. The protein localises to the nucleoid. Its function is as follows. Binds to DNA and alters its conformation. May be involved in regulation of gene expression, nucleoid organization and DNA protection. This Pectobacterium atrosepticum (strain SCRI 1043 / ATCC BAA-672) (Erwinia carotovora subsp. atroseptica) protein is Nucleoid-associated protein ECA1177.